We begin with the raw amino-acid sequence, 261 residues long: Putative hydro-lyase SAR11_0660 (261 aa).

The protein belongs to the D-glutamate cyclase family.

The sequence is that of Putative hydro-lyase SAR11_0660 from Pelagibacter ubique (strain HTCC1062).